The chain runs to 254 residues: Dihydroorotate dehydrogenase B (NAD(+)), electron transfer subunit (254 aa).

One can recognise an FAD-binding FR-type domain in the interval 1–99 (MLQTEMKVIQ…LGPLGKGFDI (99 aa)). FAD-binding positions include 50-53 (RPIS), 67-69 (LYR), and 74-75 (GT). 4 residues coordinate [2Fe-2S] cluster: Cys-218, Cys-223, Cys-226, and Cys-241.

Belongs to the PyrK family. Heterotetramer of 2 PyrK and 2 PyrD type B subunits. Requires [2Fe-2S] cluster as cofactor. FAD serves as cofactor.

Its pathway is pyrimidine metabolism; UMP biosynthesis via de novo pathway; orotate from (S)-dihydroorotate (NAD(+) route): step 1/1. Functionally, responsible for channeling the electrons from the oxidation of dihydroorotate from the FMN redox center in the PyrD type B subunit to the ultimate electron acceptor NAD(+). The chain is Dihydroorotate dehydrogenase B (NAD(+)), electron transfer subunit from Listeria welshimeri serovar 6b (strain ATCC 35897 / DSM 20650 / CCUG 15529 / CIP 8149 / NCTC 11857 / SLCC 5334 / V8).